The primary structure comprises 933 residues: MSLNTLANIVPEKDTSLEKDHPLREDIRLLGRMLGDTIRELEGEPMFDLVETIRQTAVRFRREQDEEAGKELDTILNHLSHKETTAVVRAFSYFSLLSNIAEDLHHNRRRRAHLRAGSPPQDGSVTLALERVVAKGINTQQLENFFAEALISPVLTAHPTEVQRRSILDYQLKIQRLLKERDRTQLTPNELRHNEEDLRSAIQTLWQTRVLRSVRLTVQDEIENGLIYYHYTFLKQIPYIYAKIEDILERHMDKAAPCIASFLRIGSWIGGDRDGNPFVTHQIMLHAAERHSALILDYYIEEVEKIGQAMSLTERLIKVTSELEGLASTAPGLPASRIDEPYRRVFLGMHTRLIATSRYLSPHVGRQYQENTAEPYADSAEFVHDLDIVIRSLKQHQSNKLAQGAIRDLRRAVDVFGFHLASLDMRQHSKIHEQVVSELYEKNAQDNRNYPDLTRAERAEWLLAELKRSHPLVSSLSDYSDITQGELRILRMAAEIQRRFGHVALPNYIISMATGVIHILEAALLLKEAGLLQFGEAARSTVNIIPLFETIDDLRGCANVMEELFSLPEYRKMLRSRSNLQEVMLGYSDSNKDGGFVTSNWEIHKAEIELTKVFNRHGVRLRLFHGRGGTVGRGGGPSYQGILAQPPGSVNGQIRLTEQGEVIASKYTDPEIGRRNLETLVAATIESTLLDRDAIHCHTPQCYQIMEELSASAYAAYRDLVYKTPNFTQFFQESTPIREIAGLHIGSRPTSRKPSNKIEDLRTIPWVFSWSLNRTMIPGWYGFGTAVENFVQQAGNTQDVLIQMQKMYRTWPFFQTLLSNMDMVLAKSDLGIASRYAELVTDSELRQYVFTAIRTEWELCVKWLFAITGHTELLQDNPTLARSIRIRTPYIDPMNHLQVELLRRYRSGDDDDAIRRAIHLTINGVATGLRNSG.

Active-site residues include His158 and Lys592.

Belongs to the PEPCase type 1 family. The cofactor is Mg(2+).

It carries out the reaction oxaloacetate + phosphate = phosphoenolpyruvate + hydrogencarbonate. Forms oxaloacetate, a four-carbon dicarboxylic acid source for the tricarboxylic acid cycle. The protein is Phosphoenolpyruvate carboxylase of Nitrosomonas eutropha (strain DSM 101675 / C91 / Nm57).